The sequence spans 97 residues: Acylphosphatase (97 aa).

An Acylphosphatase-like domain is found at 11 to 97 (TYYVRVRGTV…EKRYERFEQH (87 aa)). Residues Arg26 and Asn44 contribute to the active site. The tract at residues 76–97 (RVTEVSGEERSTEKRYERFEQH) is disordered. Over residues 82-97 (GEERSTEKRYERFEQH) the composition is skewed to basic and acidic residues.

The protein belongs to the acylphosphatase family.

It carries out the reaction an acyl phosphate + H2O = a carboxylate + phosphate + H(+). The sequence is that of Acylphosphatase (acyP) from Paraburkholderia xenovorans (strain LB400).